We begin with the raw amino-acid sequence, 291 residues long: 33 kDa chaperonin (291 aa).

Cystine bridges form between C237–C239 and C270–C273.

This sequence belongs to the HSP33 family. In terms of processing, under oxidizing conditions two disulfide bonds are formed involving the reactive cysteines. Under reducing conditions zinc is bound to the reactive cysteines and the protein is inactive.

It localises to the cytoplasm. Functionally, redox regulated molecular chaperone. Protects both thermally unfolding and oxidatively damaged proteins from irreversible aggregation. Plays an important role in the bacterial defense system toward oxidative stress. In Bacillus mycoides (strain KBAB4) (Bacillus weihenstephanensis), this protein is 33 kDa chaperonin.